The chain runs to 272 residues: Rhomboid-type serine protease B (272 aa).

The next 5 helical transmembrane spans lie at 30 to 50, 72 to 92, 103 to 123, 133 to 153, and 164 to 184; these read IVLL…WSVV, PFIH…TPLL, TAVA…YILV, AVVG…IKTF, and TKIP…IFVP. The active-site Nucleophile is serine 138. Asparagine 185 carries an N-linked (GlcNAc...) asparagine glycan. The helical transmembrane segment at 186–206 threads the bilayer; sequence TSFLGHLSAIIIGYLLGLGYL. Histidine 191 is an active-site residue.

This sequence belongs to the peptidase S54 family.

The protein localises to the membrane. It catalyses the reaction Cleaves type-1 transmembrane domains using a catalytic dyad composed of serine and histidine that are contributed by different transmembrane domains.. Its function is as follows. Rhomboid protease that catalyzes intramembrane proteolysis. Required for transcription factor srbA activation by mediating its release from the membrane and thereby regulating its activity under hypoxic conditions. Essential for iron homeostasis and resistance to azoles such as voriconazole. Required for virulence in murine models of invasive pulmonary aspergillosis (IPA). The chain is Rhomboid-type serine protease B from Aspergillus fumigatus (strain CBS 144.89 / FGSC A1163 / CEA10) (Neosartorya fumigata).